Consider the following 121-residue polypeptide: Iron-sulfur cluster assembly protein CyaY (121 aa).

This sequence belongs to the frataxin family.

In terms of biological role, involved in iron-sulfur (Fe-S) cluster assembly. May act as a regulator of Fe-S biogenesis. This Buchnera aphidicola subsp. Schizaphis graminum (strain Sg) protein is Iron-sulfur cluster assembly protein CyaY.